Reading from the N-terminus, the 210-residue chain is Transmembrane protein 61 (210 aa).

A run of 2 helical transmembrane segments spans residues 18-38 (YCMT…FAWW) and 69-89 (VSFV…LWSV). Residues 140–172 (VAEGPPTPPAYPTEEALEPSGSRDALLSTQPAW) are disordered.

Its subcellular location is the membrane. This chain is Transmembrane protein 61 (TMEM61), found in Homo sapiens (Human).